The following is a 133-amino-acid chain: ATP synthase epsilon chain (133 aa).

It belongs to the ATPase epsilon chain family. In terms of assembly, F-type ATPases have 2 components, CF(1) - the catalytic core - and CF(0) - the membrane proton channel. CF(1) has five subunits: alpha(3), beta(3), gamma(1), delta(1), epsilon(1). CF(0) has three main subunits: a, b and c.

The protein resides in the cell membrane. Functionally, produces ATP from ADP in the presence of a proton gradient across the membrane. This Mycoplasma pneumoniae (strain ATCC 29342 / M129 / Subtype 1) (Mycoplasmoides pneumoniae) protein is ATP synthase epsilon chain (atpC).